The chain runs to 288 residues: Transmembrane and coiled-coil domain-containing protein 5A (288 aa).

Positions 10 to 192 (KRNIISLNMD…ALFLEREVSK (183 aa)) form a coiled coil. The helical transmembrane segment at 224–244 (IFCCLFFITLFFIRLLSYMFF) threads the bilayer.

Belongs to the TMCO5 family.

The protein localises to the endoplasmic reticulum membrane. Its subcellular location is the nucleus membrane. This Homo sapiens (Human) protein is Transmembrane and coiled-coil domain-containing protein 5A (TMCO5A).